Consider the following 424-residue polypeptide: Anaerobic glycerol-3-phosphate dehydrogenase subunit B (424 aa).

It belongs to the anaerobic G-3-P dehydrogenase subunit B family. As to quaternary structure, composed of a catalytic GlpA/B dimer and of membrane bound GlpC. The cofactor is FMN.

It catalyses the reaction a quinone + sn-glycerol 3-phosphate = dihydroxyacetone phosphate + a quinol. It participates in polyol metabolism; glycerol degradation via glycerol kinase pathway; glycerone phosphate from sn-glycerol 3-phosphate (anaerobic route): step 1/1. Its function is as follows. Conversion of glycerol 3-phosphate to dihydroxyacetone. Uses fumarate or nitrate as electron acceptor. This is Anaerobic glycerol-3-phosphate dehydrogenase subunit B from Yersinia enterocolitica serotype O:8 / biotype 1B (strain NCTC 13174 / 8081).